Reading from the N-terminus, the 703-residue chain is Polyribonucleotide nucleotidyltransferase (703 aa).

Mg(2+)-binding residues include D482 and D488. In terms of domain architecture, KH spans 549-607 (PKAQVMKIPEDKVGLVIGPAGKNIKYIKEQFGASVWIDGANAYINAPTIEAVNKAADFI). Residues 617–679 (GGVYEGKVIR…EQNRLNLCSP (63 aa)) enclose the S1 motif domain. The interval 677-703 (CSPDYQKPENQERPRKEQLNRKPHHRK) is disordered. The segment covering 682-696 (QKPENQERPRKEQLN) has biased composition (basic and acidic residues).

It belongs to the polyribonucleotide nucleotidyltransferase family. The cofactor is Mg(2+).

The protein localises to the cytoplasm. It catalyses the reaction RNA(n+1) + phosphate = RNA(n) + a ribonucleoside 5'-diphosphate. Its function is as follows. Involved in mRNA degradation. Catalyzes the phosphorolysis of single-stranded polyribonucleotides processively in the 3'- to 5'-direction. The polypeptide is Polyribonucleotide nucleotidyltransferase (Hydrogenobaculum sp. (strain Y04AAS1)).